A 112-amino-acid chain; its full sequence is uncharacterized protein (112 aa).

Residues 5–112 (IFQKIIKGII…LLGGKKLNKI (108 aa)) form the HIT domain. The Histidine triad motif signature appears at 98 to 102 (HLHLH).

This is an uncharacterized protein from Buchnera aphidicola subsp. Baizongia pistaciae (strain Bp).